Reading from the N-terminus, the 999-residue chain is Testis anion transporter 1 (999 aa).

At 1–93 (MQTERSLQSF…YRFKDWLLGD (93 aa)) the chain is on the cytoplasmic side. Residues 94-114 (LLAGLSVGLVQVPQGLILSLL) form a helical membrane-spanning segment. The Extracellular segment spans residues 115-117 (TRQ). The helical transmembrane segment at 118 to 138 (LIPPLNVTYAAFCSSVIYVIF) threads the bilayer. Residue glycine 139 is a topological domain, cytoplasmic. The chain crosses the membrane as a helical span at residues 140–160 (SCHQMSIGPFFLVSALMINVL). The Extracellular segment spans residues 161-200 (KDRPFNNGHLILGTFVKDDFSVPTFYLSYNRSLSMVASTT). Asparagine 190 is a glycosylation site (N-linked (GlcNAc...) asparagine). A helical membrane pass occupies residues 201-221 (FLTGIIQLSMGMLGMGFMATY). Topologically, residues 222 to 230 (LPEAATSAY) are cytoplasmic. Residues 231 to 251 (LAAVALHIILAQMTCILGIMV) traverse the membrane as a helical segment. The Extracellular portion of the chain corresponds to 252 to 268 (SFHAGPISFIYNIINYC). The helical transmembrane segment at 269–289 (IALPKANSTSILLFITSVVAL) threads the bilayer. Residues 290 to 305 (RINKCIRITFNRYPIE) lie on the Cytoplasmic side of the membrane. The chain crosses the membrane as a helical span at residues 306-326 (FPMELLLILGFSLLTSKITMA). The Extracellular portion of the chain corresponds to 327-354 (TENSKMLMNMIPYSFVFPENPEFGILSR). Residues 355-375 (VVLQALSLSFVSSFLLISLGK) traverse the membrane as a helical segment. Residues 376-390 (KIANFHNYRTNSNQD) lie on the Cytoplasmic side of the membrane. The chain crosses the membrane as a helical span at residues 391–411 (LIAIGLCNLLSSFFKCCVFTG). Residues 412–427 (SLSRTTIQDKSGGRQQ) are Extracellular-facing. A helical membrane pass occupies residues 428-448 (FASLVGAGVMLLLMVKMESFF). At 449–453 (HNLPN) the chain is on the cytoplasmic side. Residues 454–474 (AVLAGIILSNVVPYLEAIYNL) traverse the membrane as a helical segment. Residues 475 to 494 (PSLWRQDQYECIIWMVTFSS) are Extracellular-facing. The chain crosses the membrane as a helical span at residues 495–515 (AILLGLDVGLLISLAFTFFVI). The Cytoplasmic portion of the chain corresponds to 516-544 (TIRSHRTKILVLGQIPNTNIYRNVNDYRE). An STAS domain is found at 541–796 (DYREVILIPG…LSLHDAVLFA (256 aa)). A helical transmembrane segment spans residues 545 to 565 (VILIPGVKIFQCCSSITFVNV). Residues 566–999 (YHLKQKVLKE…RKPHNYPNSP (434 aa)) are Extracellular-facing. An interaction with RACGAP1 region spans residues 661-999 (TVSSTSQRNI…RKPHNYPNSP (339 aa)). Disordered regions lie at residues 678-701 (EKAWLPNSPPRNSPLPPPEASESL) and 893-999 (SELD…PNSP). Pro residues predominate over residues 684–696 (NSPPRNSPLPPPE). 2 stretches are compositionally biased toward acidic residues: residues 893 to 903 (SELDPGSELDS) and 912 to 947 (ELESELETDAQTEPETEEEPELEPEPEPEPETEPEP). Over residues 973–982 (GSSNSQSRAP) the composition is skewed to polar residues.

The protein belongs to the SLC26A/SulP transporter (TC 2.A.53) family. Interacts with RACGAP1. Interacts with CFTR; stimulates anion transport activity of CFTR. In terms of processing, N-glycosylated. In terms of tissue distribution, expressed in testis and epididymis. Located at the end of the midpiece of the flagella, known as the annulus, in spermatozoa.

The protein resides in the membrane. It catalyses the reaction sulfate(out) + chloride(in) = sulfate(in) + chloride(out). The enzyme catalyses oxalate(in) + chloride(out) = oxalate(out) + chloride(in). In terms of biological role, antiporter that mediates the exchange of sulfate and oxalate against chloride ions across a membrane. Stimulates anion transport activity of CFTR. May cooperate with CFTR in the regulation of chloride and bicarbonate ions fluxes required for activation of the ADCY10/PKA pathway during sperm motility and sperm capacitation. May play a role in sperm tail differentiation and motility and hence male fertility. This is Testis anion transporter 1 from Mus musculus (Mouse).